A 366-amino-acid chain; its full sequence is Phospho-N-acetylmuramoyl-pentapeptide-transferase (366 aa).

10 helical membrane-spanning segments follow: residues 27-47, 71-91, 93-113, 134-154, 174-194, 205-225, 245-265, 268-288, 294-314, and 343-363; these read AALFTSALIVFLFGPTIINSL, TPTMGGLMILAGIVGASLLWA, LSNVYVVATLLVTLGFGAIGF, LGIEFIIAGIAVYFMMRTALA, FLINLGIMFVVFGGFVIVGAG, GLAIVPVMIAAASFGVIAYLA, LAVVLGAVIGAGLGFLWFNAP, AIFMGDTGSLALGGTIGTVAV, IVMAIIGGLFVMETLSVIIQV, and QVVIRFWIIAVGLALLGLSTL.

The protein belongs to the glycosyltransferase 4 family. MraY subfamily. Requires Mg(2+) as cofactor.

It is found in the cell inner membrane. It catalyses the reaction UDP-N-acetyl-alpha-D-muramoyl-L-alanyl-gamma-D-glutamyl-meso-2,6-diaminopimeloyl-D-alanyl-D-alanine + di-trans,octa-cis-undecaprenyl phosphate = di-trans,octa-cis-undecaprenyl diphospho-N-acetyl-alpha-D-muramoyl-L-alanyl-D-glutamyl-meso-2,6-diaminopimeloyl-D-alanyl-D-alanine + UMP. It functions in the pathway cell wall biogenesis; peptidoglycan biosynthesis. Catalyzes the initial step of the lipid cycle reactions in the biosynthesis of the cell wall peptidoglycan: transfers peptidoglycan precursor phospho-MurNAc-pentapeptide from UDP-MurNAc-pentapeptide onto the lipid carrier undecaprenyl phosphate, yielding undecaprenyl-pyrophosphoryl-MurNAc-pentapeptide, known as lipid I. The protein is Phospho-N-acetylmuramoyl-pentapeptide-transferase of Rhizobium etli (strain CIAT 652).